Consider the following 178-residue polypeptide: N-alpha-acetyltransferase 20 (178 aa).

An N-acetyltransferase domain is found at 2 to 157 (TTLRAFTCDD…DAYDMRKALS (156 aa)). Residues 159–178 (DTEKKSIVPLPHPVRPEDIE) are disordered.

The protein belongs to the acetyltransferase family. ARD1 subfamily. Component of the N-terminal acetyltransferase B (NatB) complex which is composed of naa20 and naa25.

The protein localises to the cytoplasm. The protein resides in the nucleus. It catalyses the reaction N-terminal L-methionyl-L-asparaginyl-[protein] + acetyl-CoA = N-terminal N(alpha)-acetyl-L-methionyl-L-asparaginyl-[protein] + CoA + H(+). The enzyme catalyses N-terminal L-methionyl-L-glutaminyl-[protein] + acetyl-CoA = N-terminal N(alpha)-acetyl-L-methionyl-L-glutaminyl-[protein] + CoA + H(+). The catalysed reaction is N-terminal L-methionyl-L-aspartyl-[protein] + acetyl-CoA = N-terminal N(alpha)-acetyl-L-methionyl-L-aspartyl-[protein] + CoA + H(+). It carries out the reaction N-terminal L-methionyl-L-glutamyl-[protein] + acetyl-CoA = N-terminal N(alpha)-acetyl-L-methionyl-L-glutamyl-[protein] + CoA + H(+). Its function is as follows. Catalytic subunit of the NatB complex which catalyzes acetylation of the N-terminal methionine residues of peptides beginning with Met-Asp, Met-Glu, Met-Asn and Met-Gln. Proteins with cell cycle functions are overrepresented in the pool of NatB substrates. Required for maintaining the structure and function of actomyosin fibers and for proper cellular migration. The sequence is that of N-alpha-acetyltransferase 20 (naa20) from Xenopus laevis (African clawed frog).